The following is a 107-amino-acid chain: Phosphoribosyl-ATP pyrophosphatase (107 aa).

It belongs to the PRA-PH family.

Its subcellular location is the cytoplasm. It catalyses the reaction 1-(5-phospho-beta-D-ribosyl)-ATP + H2O = 1-(5-phospho-beta-D-ribosyl)-5'-AMP + diphosphate + H(+). It functions in the pathway amino-acid biosynthesis; L-histidine biosynthesis; L-histidine from 5-phospho-alpha-D-ribose 1-diphosphate: step 2/9. The chain is Phosphoribosyl-ATP pyrophosphatase from Brucella abortus (strain S19).